We begin with the raw amino-acid sequence, 1153 residues long: PPi-type phosphoenolpyruvate carboxykinase 2 (1153 aa).

The stretch at 1085–1131 forms a coiled coil; the sequence is RQKLEVAKLNKDLAYLNKTIAEKPRLVETLNKQIAAVKEELQYVSSE.

It belongs to the PPi-type phosphoenolpyruvate carboxykinase family. As to quaternary structure, monomer and trimer; forms heterotrimers with PEPCK1 and PEPCK3.

The protein resides in the cytoplasm. The protein localises to the cytosol. It carries out the reaction oxaloacetate + diphosphate = phosphoenolpyruvate + phosphate + CO2. In terms of biological role, inorganic pyrophosphate (PPi)-dependent phosphoenolpyruvate carboxykinase, which regulates the carbon flow of the central metabolism by fixing CO(2) to phosphoenolpyruvate to produce oxaloacetate. Can also produce pyruvate and diphosphate from phosphoenolpyruvate and phosphate. The protein is PPi-type phosphoenolpyruvate carboxykinase 2 of Entamoeba histolytica (strain ATCC 30459 / HM-1:IMSS / ABRM).